A 535-amino-acid chain; its full sequence is Zinc finger protein squeeze (535 aa).

2 stretches are compositionally biased toward low complexity: residues 70–97 (MVME…HPPQ) and 131–142 (SSASGSGSNGSS). The segment at 70–157 (MVMEQQPHPD…RRGDGDQAKP (88 aa)) is disordered. Over residues 145-156 (EESRRGDGDQAK) the composition is skewed to basic and acidic residues. 5 C2H2-type zinc fingers span residues 158–180 (YKCG…TRIH), 186–208 (YRCE…IRTH), 214–238 (YKCR…SRCH), 244–266 (FKCN…IPKH), and 275–297 (HICN…LQKH). Thr395 is modified (phosphothreonine). Phosphoserine is present on residues Ser399 and Ser401. The disordered stretch occupies residues 417-475 (TPQHHLQQQQQQQQQQQAQQQQQAQHQPSPGPGNSAFTPLSATVAPPPHLQQHRGPPGS). Residues 419 to 443 (QHHLQQQQQQQQQQQAQQQQQAQHQ) show a composition bias toward low complexity. Phosphoserine is present on Ser475. Residues Tyr479 and Tyr481 each carry the phosphotyrosine modification.

This sequence belongs to the krueppel C2H2-type zinc-finger protein family. Interacts with nab; which acts as a coactivator. Interacts with ap. Largely restricted to subsets of cells in the CNS throughout embryonic and first instar larval (L1) development. Expressed in a population of lateral interneurons, primarily projecting axons in the anterior and posterior commissures. Overlaps with ap within the thoracic ap cluster. By stage 17, it is restricted to 2 neurons within the ap-cluster, with one neuron typically continuing to display higher levels of expression. Selectively expressed at higher levels within the FMRFa Tv neurons. Expressed in all leucokinergic cells.

Its subcellular location is the nucleus. Functionally, transcription factor involved in neuronal fate specification. First required in embryonic CNS development to define the number of cells that express apterous (ap) in the ap thoracic cluster of interneurons. Later on, it plays a central role in the combinatorial code of transcription factors that specifies the fate of the Tv neuron in the ap cluster by participating in the transcription regulation of FMRFa in Tv cells. Also required for projection neuron dendritic targeting. This Drosophila melanogaster (Fruit fly) protein is Zinc finger protein squeeze (sqz).